The chain runs to 476 residues: Retinoic acid receptor gamma (476 aa).

The segment at 1-109 (MANSSKERLC…PPPPPRVYKP (109 aa)) is modulating. Residues 81–96 (STVETQSTSSEEMVPS) show a composition bias toward low complexity. Residues 81–102 (STVETQSTSSEEMVPSSPSPPP) form a disordered region. NR C4-type zinc fingers lie at residues 110–130 (CFVC…CEGC) and 146–170 (CHRD…LQKC). Residues 110 to 175 (CFVCNDKSSG…RLQKCFQVGM (66 aa)) constitute a DNA-binding region (nuclear receptor). A hinge region spans residues 176–205 (SKEAVRNDRNKKKKEIKEEVVLPDSYEMPP). The Nuclear localization signal signature appears at 184-189 (RNKKKK). The region spanning 206-440 (EMEELIQKVS…PLIREMLENP (235 aa)) is the NR LBD domain. Positions 435-476 (EMLENPEAFEDGAATPKPSERSSSESSNGSPTGEDSSGSKTP) are disordered. Residues 462 to 476 (NGSPTGEDSSGSKTP) show a composition bias toward polar residues.

It belongs to the nuclear hormone receptor family. NR1 subfamily. In terms of assembly, heterodimer; with a rxr molecule. Binds DNA preferentially as a rar/rxr heterodimer. In terms of tissue distribution, expressed in embryos, tadpoles and various adult tissue such as kidney, testis, brain, liver, skeletal muscle and spleen.

Its subcellular location is the nucleus. Receptor for retinoic acid. Retinoic acid receptors bind as heterodimers to their target response elements in response to their ligands, all-trans or 9-cis retinoic acid, and regulate gene expression in various biological processes. The rar/rxr heterodimers bind to the retinoic acid response elements (RARE) composed of tandem 5'-AGGTCA-3' sites known as DR1-DR5. The polypeptide is Retinoic acid receptor gamma (rarg) (Xenopus laevis (African clawed frog)).